The primary structure comprises 213 residues: High frequency lysogenization protein HflD homolog (213 aa).

This sequence belongs to the HflD family.

It localises to the cytoplasm. Its subcellular location is the cell inner membrane. The polypeptide is High frequency lysogenization protein HflD homolog (Alcanivorax borkumensis (strain ATCC 700651 / DSM 11573 / NCIMB 13689 / SK2)).